Consider the following 134-residue polypeptide: Replication enhancer protein (134 aa).

It belongs to the geminiviridae replication enhancer protein family. As to quaternary structure, homooligomer. Interacts with the replication-associated protein (REP). Interacts with host proliferating cell nuclear antigen (PCNA). Interacts with host retinoblastoma-related protein 1 (RBR1), and may thereby deregulate the host cell cycle. Oligomerization and interaction with PCNA are necessary for optimal replication enhancement.

Its function is as follows. Increases viral DNA accumulation. Enhances infectivity and symptom expression. In Manihot esculenta (Cassava), this protein is Replication enhancer protein.